Here is a 461-residue protein sequence, read N- to C-terminus: tRNA modification GTPase MnmE (461 aa).

R23, E88, and R127 together coordinate (6S)-5-formyl-5,6,7,8-tetrahydrofolate. Residues 223–382 form the TrmE-type G domain; it reads GLSTVIVGKP…IEDALAEMVY (160 aa). N233 contributes to the K(+) binding site. Residues 233-238, 252-258, and 277-280 each bind GTP; these read NVGKSS, TDVPGTT, and DTAG. S237 lines the Mg(2+) pocket. K(+) is bound by residues T252, V254, and T257. T258 provides a ligand contact to Mg(2+). (6S)-5-formyl-5,6,7,8-tetrahydrofolate is bound at residue K461.

It belongs to the TRAFAC class TrmE-Era-EngA-EngB-Septin-like GTPase superfamily. TrmE GTPase family. As to quaternary structure, homodimer. Heterotetramer of two MnmE and two MnmG subunits. K(+) serves as cofactor.

The protein resides in the cytoplasm. Exhibits a very high intrinsic GTPase hydrolysis rate. Involved in the addition of a carboxymethylaminomethyl (cmnm) group at the wobble position (U34) of certain tRNAs, forming tRNA-cmnm(5)s(2)U34. This is tRNA modification GTPase MnmE from Alkaliphilus oremlandii (strain OhILAs) (Clostridium oremlandii (strain OhILAs)).